We begin with the raw amino-acid sequence, 222 residues long: Triosephosphate isomerase (222 aa).

Residue 9–11 coordinates substrate; sequence NYK. The active-site Electrophile is H93. E141 (proton acceptor) is an active-site residue. Substrate contacts are provided by residues I146, G181, and 202 to 203; that span reads AS.

This sequence belongs to the triosephosphate isomerase family. Homotetramer; dimer of dimers.

The protein localises to the cytoplasm. The catalysed reaction is D-glyceraldehyde 3-phosphate = dihydroxyacetone phosphate. It participates in carbohydrate biosynthesis; gluconeogenesis. Its pathway is carbohydrate degradation; glycolysis; D-glyceraldehyde 3-phosphate from glycerone phosphate: step 1/1. Involved in the gluconeogenesis. Catalyzes stereospecifically the conversion of dihydroxyacetone phosphate (DHAP) to D-glyceraldehyde-3-phosphate (G3P). The polypeptide is Triosephosphate isomerase (Methanosarcina barkeri (strain Fusaro / DSM 804)).